The primary structure comprises 751 residues: Catalase-peroxidase (751 aa).

A disordered region spans residues 1–21 (MSNESKCPFHQTAGGGTTNRD). The segment at residues 90–244 (WHSAGTYRIG…LAAVQMGLIY (155 aa)) is a cross-link (tryptophyl-tyrosyl-methioninium (Trp-Tyr) (with M-270)). Residue His91 is the Proton acceptor of the active site. The tract at residues 195 to 227 (YGKDQVKAQPPGQGDLVAEPAKHGEEQNRDLSA) is disordered. Residues 214-227 (PAKHGEEQNRDLSA) show a composition bias toward basic and acidic residues. Positions 244-270 (YVNPEGPEGNPDPVASGKDIRETFGRM) form a cross-link, tryptophyl-tyrosyl-methioninium (Tyr-Met) (with W-90). Residue His285 coordinates heme b. Positions 365–387 (AHQWRPKEGKGAGTVPDAHDPGK) are disordered.

This sequence belongs to the peroxidase family. Peroxidase/catalase subfamily. In terms of assembly, homodimer or homotetramer. It depends on heme b as a cofactor. Post-translationally, formation of the three residue Trp-Tyr-Met cross-link is important for the catalase, but not the peroxidase activity of the enzyme.

The enzyme catalyses H2O2 + AH2 = A + 2 H2O. It catalyses the reaction 2 H2O2 = O2 + 2 H2O. Bifunctional enzyme with both catalase and broad-spectrum peroxidase activity. In Pseudomonas putida (strain ATCC 700007 / DSM 6899 / JCM 31910 / BCRC 17059 / LMG 24140 / F1), this protein is Catalase-peroxidase.